The following is a 459-amino-acid chain: Cysteine--tRNA ligase (459 aa).

C28 lines the Zn(2+) pocket. A 'HIGH' region motif is present at residues 30 to 40 (VTIYDLCHIGH). 3 residues coordinate Zn(2+): C209, H234, and E238. The 'KMSKS' region motif lies at 266–270 (KMSKS). Position 269 (K269) interacts with ATP.

This sequence belongs to the class-I aminoacyl-tRNA synthetase family. Monomer. The cofactor is Zn(2+).

It localises to the cytoplasm. It catalyses the reaction tRNA(Cys) + L-cysteine + ATP = L-cysteinyl-tRNA(Cys) + AMP + diphosphate. This Vibrio cholerae serotype O1 (strain ATCC 39541 / Classical Ogawa 395 / O395) protein is Cysteine--tRNA ligase.